We begin with the raw amino-acid sequence, 237 residues long: Phosphoribosylaminoimidazole-succinocarboxamide synthase (237 aa).

Belongs to the SAICAR synthetase family.

It carries out the reaction 5-amino-1-(5-phospho-D-ribosyl)imidazole-4-carboxylate + L-aspartate + ATP = (2S)-2-[5-amino-1-(5-phospho-beta-D-ribosyl)imidazole-4-carboxamido]succinate + ADP + phosphate + 2 H(+). It participates in purine metabolism; IMP biosynthesis via de novo pathway; 5-amino-1-(5-phospho-D-ribosyl)imidazole-4-carboxamide from 5-amino-1-(5-phospho-D-ribosyl)imidazole-4-carboxylate: step 1/2. The protein is Phosphoribosylaminoimidazole-succinocarboxamide synthase of Marinobacter nauticus (strain ATCC 700491 / DSM 11845 / VT8) (Marinobacter aquaeolei).